The primary structure comprises 570 residues: Sulfite reductase [NADPH] hemoprotein beta-component (570 aa).

4 residues coordinate [4Fe-4S] cluster: C434, C440, C479, and C483. C483 provides a ligand contact to siroheme.

This sequence belongs to the nitrite and sulfite reductase 4Fe-4S domain family. As to quaternary structure, alpha(8)-beta(8). The alpha component is a flavoprotein, the beta component is a hemoprotein. It depends on siroheme as a cofactor. [4Fe-4S] cluster is required as a cofactor.

It carries out the reaction hydrogen sulfide + 3 NADP(+) + 3 H2O = sulfite + 3 NADPH + 4 H(+). It functions in the pathway sulfur metabolism; hydrogen sulfide biosynthesis; hydrogen sulfide from sulfite (NADPH route): step 1/1. In terms of biological role, component of the sulfite reductase complex that catalyzes the 6-electron reduction of sulfite to sulfide. This is one of several activities required for the biosynthesis of L-cysteine from sulfate. This Shigella flexneri protein is Sulfite reductase [NADPH] hemoprotein beta-component.